The sequence spans 78 residues: Acyl carrier protein (78 aa).

A Carrier domain is found at 2 to 77 (SEIAQKVKSI…QAIAYLEQHV (76 aa)). An O-(pantetheine 4'-phosphoryl)serine modification is found at Ser-37.

It belongs to the acyl carrier protein (ACP) family. Post-translationally, 4'-phosphopantetheine is transferred from CoA to a specific serine of apo-ACP by AcpS. This modification is essential for activity because fatty acids are bound in thioester linkage to the sulfhydryl of the prosthetic group.

It localises to the cytoplasm. It participates in lipid metabolism; fatty acid biosynthesis. In terms of biological role, carrier of the growing fatty acid chain in fatty acid biosynthesis. The chain is Acyl carrier protein from Cytophaga hutchinsonii (strain ATCC 33406 / DSM 1761 / CIP 103989 / NBRC 15051 / NCIMB 9469 / D465).